Reading from the N-terminus, the 510-residue chain is Probable cytosol aminopeptidase (510 aa).

Mn(2+) is bound by residues K254 and D259. The active site involves K266. Mn(2+) is bound by residues D277, D336, and E338. R340 is a catalytic residue. Residues 487-510 (AQPVKASPKTRPARKSTPAAKTRA) are disordered.

Belongs to the peptidase M17 family. Requires Mn(2+) as cofactor.

It localises to the cytoplasm. The catalysed reaction is Release of an N-terminal amino acid, Xaa-|-Yaa-, in which Xaa is preferably Leu, but may be other amino acids including Pro although not Arg or Lys, and Yaa may be Pro. Amino acid amides and methyl esters are also readily hydrolyzed, but rates on arylamides are exceedingly low.. It carries out the reaction Release of an N-terminal amino acid, preferentially leucine, but not glutamic or aspartic acids.. In terms of biological role, presumably involved in the processing and regular turnover of intracellular proteins. Catalyzes the removal of unsubstituted N-terminal amino acids from various peptides. This is Probable cytosol aminopeptidase from Polaromonas naphthalenivorans (strain CJ2).